The following is a 273-amino-acid chain: Dermonecrotic toxin LamSicTox-alphaIC1 (273 aa).

Residue His-5 is part of the active site. Positions 25 and 27 each coordinate Mg(2+). Catalysis depends on His-41, which acts as the Nucleophile. 2 cysteine pairs are disulfide-bonded: Cys-45–Cys-51 and Cys-47–Cys-190. A Mg(2+)-binding site is contributed by Asp-85.

Belongs to the arthropod phospholipase D family. Class II subfamily. The cofactor is Mg(2+). Expressed by the venom gland.

It is found in the secreted. The catalysed reaction is an N-(acyl)-sphingosylphosphocholine = an N-(acyl)-sphingosyl-1,3-cyclic phosphate + choline. It catalyses the reaction an N-(acyl)-sphingosylphosphoethanolamine = an N-(acyl)-sphingosyl-1,3-cyclic phosphate + ethanolamine. It carries out the reaction a 1-acyl-sn-glycero-3-phosphocholine = a 1-acyl-sn-glycero-2,3-cyclic phosphate + choline. The enzyme catalyses a 1-acyl-sn-glycero-3-phosphoethanolamine = a 1-acyl-sn-glycero-2,3-cyclic phosphate + ethanolamine. Its function is as follows. Dermonecrotic toxins cleave the phosphodiester linkage between the phosphate and headgroup of certain phospholipids (sphingolipid and lysolipid substrates), forming an alcohol (often choline) and a cyclic phosphate. This toxin acts on sphingomyelin (SM). It may also act on ceramide phosphoethanolamine (CPE), lysophosphatidylcholine (LPC) and lysophosphatidylethanolamine (LPE), but not on lysophosphatidylserine (LPS), and lysophosphatidylglycerol (LPG). It acts by transphosphatidylation, releasing exclusively cyclic phosphate products as second products. Induces dermonecrosis, hemolysis, increased vascular permeability, edema, inflammatory response, and platelet aggregation. This chain is Dermonecrotic toxin LamSicTox-alphaIC1, found in Loxosceles amazonica (Recluse spider).